The primary structure comprises 314 residues: BTB/POZ domain-containing protein KCTD17 (314 aa).

The 71-residue stretch at 24 to 94 (KWVRLNVGGT…LRHGKLVLDK (71 aa)) folds into the BTB domain. Residues 190-268 (STPNGLSSES…PAGGSRPHPL (79 aa)) form a disordered region. The stretch at 196 to 239 (SSESSRKTKSTEEQLEEQQQQEEEVEEVEVEQVQVEADAQEKAQ) forms a coiled coil. Residues 208-225 (EQLEEQQQQEEEVEEVEV) are compositionally biased toward acidic residues.

In terms of assembly, homopentamer; forms a closed pentamer. Interacts with CUL3; interaction is direct and forms a 5:5 heterodecamer. Interacts with TCHP. Interacts with CUL3, as part of the BCR(KCTD17) E3 ubiquitin ligase complex, at least composed of CUL3, KCTD17 and RBX1. As to expression, highly expressed in brain. Highest expression is observed in the putamen and the thalamus.

Its subcellular location is the cytoplasm. Functionally, substrate-adapter for CUL3-RING ubiquitin ligase complexes which mediates the ubiquitination and subsequent proteasomal degradation of TCHP, a protein involved in ciliogenesis down-regulation. Thereby, positively regulates ciliogenesis, playing a crucial role in the initial steps of axoneme extension. May also play a role in endoplasmic reticulum calcium ion homeostasis. This Homo sapiens (Human) protein is BTB/POZ domain-containing protein KCTD17.